Here is a 314-residue protein sequence, read N- to C-terminus: Zinc transporter ZIP3 (314 aa).

The Extracellular segment spans residues 1–3 (MVK). Residues 4 to 24 (LLVAKILCMVGMFFFMLLGSL) form a helical membrane-spanning segment. The Cytoplasmic portion of the chain corresponds to 25-42 (LPVKIIEMDFEKAHRSKK). A helical membrane pass occupies residues 43-63 (ILSLCNTFGGGVFLATCFNAL). The Extracellular segment spans residues 64-85 (LPAVREKLKEVLTLAHISTDYP). A helical transmembrane segment spans residues 86-106 (LAETIMLLGFFMTVFLEQLVL). Residues 107–169 (TFRKERPAFI…QELSRSSPLR (63 aa)) lie on the Cytoplasmic side of the membrane. Phosphoserine is present on residues Ser125 and Ser129. Residues 170 to 190 (LLSLVFALSAHSVFEGLALGL) form a helical membrane-spanning segment. Topologically, residues 191–196 (QEEGEK) are extracellular. A helical membrane pass occupies residues 197 to 217 (VVSLFVGVAIHETLVAVALGI). At 218-229 (NMARSAMALRDA) the chain is on the cytoplasmic side. The chain crosses the membrane as a helical span at residues 230–250 (AKLAVTVSAMIPLGISLGLGI). Over 251-262 (DSAQGMPSSVAS) the chain is Extracellular. The chain crosses the membrane as a helical span at residues 263-283 (VLLQGLAGGTFLFVTFFEILA). The Cytoplasmic portion of the chain corresponds to 284-292 (KELEEKSDR). A helical membrane pass occupies residues 293-313 (LLKVLFLVLGYTVLAGMVFIK). A topological domain (extracellular) is located at residue Trp314.

This sequence belongs to the ZIP transporter (TC 2.A.5) family.

It localises to the cell membrane. The protein resides in the apical cell membrane. The catalysed reaction is Zn(2+)(in) = Zn(2+)(out). Functionally, transporter for the divalent cation Zn(2+). Mediates the influx of Zn(2+) into cells from extracellular space. Controls Zn(2+) accumulation into dentate gyrus granule cells in the hippocampus. Mediates Zn(2+) reuptake from the secreted milk within the alveolar lumen. In Bos taurus (Bovine), this protein is Zinc transporter ZIP3 (SLC39A3).